The chain runs to 450 residues: tRNA-2-methylthio-N(6)-dimethylallyladenosine synthase (450 aa).

Positions R8 to A124 constitute an MTTase N-terminal domain. The [4Fe-4S] cluster site is built by C17, C52, C87, C162, C166, and C169. The Radical SAM core domain occupies A148–A380. A TRAM domain is found at R383–Q445.

The protein belongs to the methylthiotransferase family. MiaB subfamily. In terms of assembly, monomer. The cofactor is [4Fe-4S] cluster.

The protein resides in the cytoplasm. It carries out the reaction N(6)-dimethylallyladenosine(37) in tRNA + (sulfur carrier)-SH + AH2 + 2 S-adenosyl-L-methionine = 2-methylsulfanyl-N(6)-dimethylallyladenosine(37) in tRNA + (sulfur carrier)-H + 5'-deoxyadenosine + L-methionine + A + S-adenosyl-L-homocysteine + 2 H(+). Catalyzes the methylthiolation of N6-(dimethylallyl)adenosine (i(6)A), leading to the formation of 2-methylthio-N6-(dimethylallyl)adenosine (ms(2)i(6)A) at position 37 in tRNAs that read codons beginning with uridine. This is tRNA-2-methylthio-N(6)-dimethylallyladenosine synthase from Acidiphilium cryptum (strain JF-5).